A 487-amino-acid polypeptide reads, in one-letter code: Steroid 21-hydroxylase (487 aa).

Heme b-binding residues include Arg-92 and Lys-117. Arg-228 serves as a coordination point for 17alpha-hydroxyprogesterone. A progesterone-binding site is contributed by Arg-228. 3 residues coordinate heme b: His-357, Arg-418, and Cys-420.

The protein belongs to the cytochrome P450 family. The cofactor is heme b.

It localises to the endoplasmic reticulum membrane. Its subcellular location is the microsome membrane. The enzyme catalyses progesterone + reduced [NADPH--hemoprotein reductase] + O2 = 21-hydroxyprogesterone + oxidized [NADPH--hemoprotein reductase] + H2O + H(+). The catalysed reaction is 17alpha-hydroxyprogesterone + reduced [NADPH--hemoprotein reductase] + O2 = 11-deoxycortisol + oxidized [NADPH--hemoprotein reductase] + H2O + H(+). In terms of biological role, a cytochrome P450 monooxygenase that plays a major role in adrenal steroidogenesis. Catalyzes the hydroxylation at C-21 of progesterone and 17alpha-hydroxyprogesterone to respectively form 11-deoxycorticosterone and 11-deoxycortisol, intermediate metabolites in the biosynthetic pathway of mineralocorticoids and glucocorticoids. Mechanistically, uses molecular oxygen inserting one oxygen atom into a substrate, and reducing the second into a water molecule, with two electrons provided by NADPH via cytochrome P450 reductase (CPR; NADPH-ferrihemoprotein reductase). The chain is Steroid 21-hydroxylase (Cyp21) from Mus musculus (Mouse).